A 714-amino-acid polypeptide reads, in one-letter code: Polyribonucleotide nucleotidyltransferase (714 aa).

The Mg(2+) site is built by D487 and D493. In terms of domain architecture, KH spans 554–613 (PRIETLKIPTDKIREVIGTGGKVIREIVEKTGAKINIEDDGTVKVASSDGNSIKAAIAWI). The S1 motif domain occupies 623–691 (GQIYEGTVVK…DRGKVRLSMR (69 aa)).

This sequence belongs to the polyribonucleotide nucleotidyltransferase family. The cofactor is Mg(2+).

The protein localises to the cytoplasm. The enzyme catalyses RNA(n+1) + phosphate = RNA(n) + a ribonucleoside 5'-diphosphate. Functionally, involved in mRNA degradation. Catalyzes the phosphorolysis of single-stranded polyribonucleotides processively in the 3'- to 5'-direction. The polypeptide is Polyribonucleotide nucleotidyltransferase (Methylocella silvestris (strain DSM 15510 / CIP 108128 / LMG 27833 / NCIMB 13906 / BL2)).